The chain runs to 229 residues: Lipoprotein-releasing system ATP-binding protein LolD (229 aa).

The ABC transporter domain maps to 7–229; that stretch reads LQCINLTKSF…KNGQLFNNKN (223 aa). Residue 43 to 50 coordinates ATP; it reads GKSGSGKS.

Belongs to the ABC transporter superfamily. Lipoprotein translocase (TC 3.A.1.125) family. In terms of assembly, the complex is composed of two ATP-binding proteins (LolD) and two transmembrane proteins (LolC and LolE).

It localises to the cell inner membrane. Functionally, part of the ABC transporter complex LolCDE involved in the translocation of mature outer membrane-directed lipoproteins, from the inner membrane to the periplasmic chaperone, LolA. Responsible for the formation of the LolA-lipoprotein complex in an ATP-dependent manner. The protein is Lipoprotein-releasing system ATP-binding protein LolD of Buchnera aphidicola subsp. Schizaphis graminum (strain Sg).